The primary structure comprises 274 residues: Rhamnulose-1-phosphate aldolase (274 aa).

The active site involves E117. H141, H143, and H212 together coordinate Zn(2+).

This sequence belongs to the aldolase class II family. RhaD subfamily. As to quaternary structure, homotetramer. Requires Zn(2+) as cofactor.

It localises to the cytoplasm. It carries out the reaction L-rhamnulose 1-phosphate = (S)-lactaldehyde + dihydroxyacetone phosphate. It participates in carbohydrate degradation; L-rhamnose degradation; glycerone phosphate from L-rhamnose: step 3/3. Its function is as follows. Catalyzes the reversible cleavage of L-rhamnulose-1-phosphate to dihydroxyacetone phosphate (DHAP) and L-lactaldehyde. The protein is Rhamnulose-1-phosphate aldolase of Yersinia pestis.